A 123-amino-acid chain; its full sequence is Class I hydrophobin 2 (123 aa).

A signal peptide spans 1 to 16 (MYAYTVIAFLAASVAA). 4 disulfide bridges follow: Cys35-Cys97, Cys43-Cys91, Cys44-Cys72, and Cys98-Cys116.

Belongs to the fungal hydrophobin family.

The protein resides in the secreted. It localises to the cell wall. In terms of biological role, aerial growth, conidiation, and dispersal of filamentous fungi in the environment rely upon a capability of their secreting small amphipathic proteins called hydrophobins (HPBs) with low sequence identity. Class I can self-assemble into an outermost layer of rodlet bundles on aerial cell surfaces, conferring cellular hydrophobicity that supports fungal growth, development and dispersal; whereas Class II form highly ordered films at water-air interfaces through intermolecular interactions but contribute nothing to the rodlet structure. HYD1 and HYD2 are required for the structural integrity of the long aerial chains of microconidia. Does not seem to be important for the ability to cause seedling disease. In Gibberella moniliformis (Maize ear and stalk rot fungus), this protein is Class I hydrophobin 2.